The sequence spans 121 residues: Large ribosomal subunit protein bL12 (121 aa).

It belongs to the bacterial ribosomal protein bL12 family. In terms of assembly, homodimer. Part of the ribosomal stalk of the 50S ribosomal subunit. Forms a multimeric L10(L12)X complex, where L10 forms an elongated spine to which 2 to 4 L12 dimers bind in a sequential fashion. Binds GTP-bound translation factors.

In terms of biological role, forms part of the ribosomal stalk which helps the ribosome interact with GTP-bound translation factors. Is thus essential for accurate translation. This Pseudomonas savastanoi pv. phaseolicola (strain 1448A / Race 6) (Pseudomonas syringae pv. phaseolicola (strain 1448A / Race 6)) protein is Large ribosomal subunit protein bL12.